The sequence spans 196 residues: Holliday junction branch migration complex subunit RuvA (196 aa).

The segment at 1–65 is domain I; it reads MIGYLRGKII…EDALQLFGFH (65 aa). Residues 66-140 form a domain II region; the sequence is DKEEKNLFLS…GKLVSIEEGG (75 aa). A flexible linker region spans residues 140–144; the sequence is GVVAK. Residues 145–196 are domain III; the sequence is AKSVAHTQITSALLNLGYKSQLVDQFVSSLPADIAVEDGIRKGFQTLSGGLS.

It belongs to the RuvA family. Homotetramer. Forms an RuvA(8)-RuvB(12)-Holliday junction (HJ) complex. HJ DNA is sandwiched between 2 RuvA tetramers; dsDNA enters through RuvA and exits via RuvB. An RuvB hexamer assembles on each DNA strand where it exits the tetramer. Each RuvB hexamer is contacted by two RuvA subunits (via domain III) on 2 adjacent RuvB subunits; this complex drives branch migration. In the full resolvosome a probable DNA-RuvA(4)-RuvB(12)-RuvC(2) complex forms which resolves the HJ.

The protein resides in the cytoplasm. Functionally, the RuvA-RuvB-RuvC complex processes Holliday junction (HJ) DNA during genetic recombination and DNA repair, while the RuvA-RuvB complex plays an important role in the rescue of blocked DNA replication forks via replication fork reversal (RFR). RuvA specifically binds to HJ cruciform DNA, conferring on it an open structure. The RuvB hexamer acts as an ATP-dependent pump, pulling dsDNA into and through the RuvAB complex. HJ branch migration allows RuvC to scan DNA until it finds its consensus sequence, where it cleaves and resolves the cruciform DNA. This chain is Holliday junction branch migration complex subunit RuvA, found in Bdellovibrio bacteriovorus (strain ATCC 15356 / DSM 50701 / NCIMB 9529 / HD100).